The chain runs to 1588 residues: Pentafunctional AROM polypeptide (1588 aa).

Positions 1–392 are 3-dehydroquinate synthase; that stretch reads MVQLAKVPIL…YGDSAQFVSD (392 aa). NAD(+) contacts are provided by residues 43–45, 78–81, 109–111, and Asp-114; these read DTN, ETSK, and GGV. Arg-125 contributes to the 7-phospho-2-dehydro-3-deoxy-D-arabino-heptonate binding site. NAD(+) is bound at residue 134-135; sequence TS. 7-phospho-2-dehydro-3-deoxy-D-arabino-heptonate contacts are provided by Asp-141 and Lys-147. Lys-156 contributes to the NAD(+) binding site. 7-phospho-2-dehydro-3-deoxy-D-arabino-heptonate is bound at residue Asn-157. NAD(+) is bound by residues 174–177 and Asn-185; that span reads WLET. Glu-189 lines the Zn(2+) pocket. 7-phospho-2-dehydro-3-deoxy-D-arabino-heptonate is bound by residues 189–192 and Lys-258; that span reads EVIK. Glu-268 (proton acceptor; for 3-dehydroquinate synthase activity) is an active-site residue. Residues 272 to 276 and His-279 contribute to the 7-phospho-2-dehydro-3-deoxy-D-arabino-heptonate site; that span reads RNLLN. His-279 provides a ligand contact to Zn(2+). His-283 functions as the Proton acceptor; for 3-dehydroquinate synthase activity in the catalytic mechanism. 7-phospho-2-dehydro-3-deoxy-D-arabino-heptonate contacts are provided by His-295 and Lys-364. His-295 provides a ligand contact to Zn(2+). The interval 405 to 871 is EPSP synthase; that stretch reads VYPFKDIPAD…WDVLHSELGA (467 aa). Cys-853 (for EPSP synthase activity) is an active-site residue. Residues 890 to 1080 form a shikimate kinase region; the sequence is SVVIIGMRAA…IPSGRSAFVC (191 aa). 895–902 is an ATP binding site; it reads GMRAAGKT. A 3-dehydroquinase region spans residues 1081 to 1293; sequence LTFDDLTEQT…AAPGQLTVAQ (213 aa). The Proton acceptor; for 3-dehydroquinate dehydratase activity role is filled by His-1198. Catalysis depends on Lys-1227, which acts as the Schiff-base intermediate with substrate; for 3-dehydroquinate dehydratase activity. The segment at 1306 to 1588 is shikimate dehydrogenase; the sequence is PKELFVVGKP…KAIFDAVTKE (283 aa).

In the N-terminal section; belongs to the sugar phosphate cyclases superfamily. Dehydroquinate synthase family. This sequence in the 2nd section; belongs to the EPSP synthase family. The protein in the 3rd section; belongs to the shikimate kinase family. It in the 4th section; belongs to the type-I 3-dehydroquinase family. In the C-terminal section; belongs to the shikimate dehydrogenase family. In terms of assembly, homodimer. It depends on Zn(2+) as a cofactor.

The protein localises to the cytoplasm. The catalysed reaction is 7-phospho-2-dehydro-3-deoxy-D-arabino-heptonate = 3-dehydroquinate + phosphate. It carries out the reaction 3-dehydroquinate = 3-dehydroshikimate + H2O. The enzyme catalyses shikimate + NADP(+) = 3-dehydroshikimate + NADPH + H(+). It catalyses the reaction shikimate + ATP = 3-phosphoshikimate + ADP + H(+). The catalysed reaction is 3-phosphoshikimate + phosphoenolpyruvate = 5-O-(1-carboxyvinyl)-3-phosphoshikimate + phosphate. The protein operates within metabolic intermediate biosynthesis; chorismate biosynthesis; chorismate from D-erythrose 4-phosphate and phosphoenolpyruvate: step 2/7. It functions in the pathway metabolic intermediate biosynthesis; chorismate biosynthesis; chorismate from D-erythrose 4-phosphate and phosphoenolpyruvate: step 3/7. It participates in metabolic intermediate biosynthesis; chorismate biosynthesis; chorismate from D-erythrose 4-phosphate and phosphoenolpyruvate: step 4/7. Its pathway is metabolic intermediate biosynthesis; chorismate biosynthesis; chorismate from D-erythrose 4-phosphate and phosphoenolpyruvate: step 5/7. The protein operates within metabolic intermediate biosynthesis; chorismate biosynthesis; chorismate from D-erythrose 4-phosphate and phosphoenolpyruvate: step 6/7. In terms of biological role, the AROM polypeptide catalyzes 5 consecutive enzymatic reactions in prechorismate polyaromatic amino acid biosynthesis. The polypeptide is Pentafunctional AROM polypeptide (Saccharomyces cerevisiae (strain ATCC 204508 / S288c) (Baker's yeast)).